Consider the following 447-residue polypeptide: Kynureninase (447 aa).

Pyridoxal 5'-phosphate contacts are provided by residues Leu106, Thr107, 134-137, Asp220, His223, and Tyr245; that span reads FPSD. Lys246 carries the post-translational modification N6-(pyridoxal phosphate)lysine. Trp275 and Asn303 together coordinate pyridoxal 5'-phosphate.

This sequence belongs to the kynureninase family. In terms of assembly, homodimer. It depends on pyridoxal 5'-phosphate as a cofactor.

The protein resides in the cytoplasm. The catalysed reaction is L-kynurenine + H2O = anthranilate + L-alanine + H(+). It catalyses the reaction 3-hydroxy-L-kynurenine + H2O = 3-hydroxyanthranilate + L-alanine + H(+). The protein operates within amino-acid degradation; L-kynurenine degradation; L-alanine and anthranilate from L-kynurenine: step 1/1. It participates in cofactor biosynthesis; NAD(+) biosynthesis; quinolinate from L-kynurenine: step 2/3. Its function is as follows. Catalyzes the cleavage of L-kynurenine (L-Kyn) and L-3-hydroxykynurenine (L-3OHKyn) into anthranilic acid (AA) and 3-hydroxyanthranilic acid (3-OHAA), respectively. This chain is Kynureninase, found in Eremothecium gossypii (strain ATCC 10895 / CBS 109.51 / FGSC 9923 / NRRL Y-1056) (Yeast).